The primary structure comprises 581 residues: Adenine deaminase (581 aa).

This sequence belongs to the metallo-dependent hydrolases superfamily. Adenine deaminase family. Requires Mn(2+) as cofactor.

The enzyme catalyses adenine + H2O + H(+) = hypoxanthine + NH4(+). In Brucella melitensis biotype 1 (strain ATCC 23456 / CCUG 17765 / NCTC 10094 / 16M), this protein is Adenine deaminase.